A 516-amino-acid chain; its full sequence is Calcitonin receptor (516 aa).

Positions 1–24 (MRFLLLNRFTLLLLLLVSPTPVLQ) are cleaved as a signal peptide. Over 25 to 146 (APTNLTDSGL…FTPDKLHNAY (122 aa)) the chain is Extracellular. Asn28, Asn73, Asn125, and Asn130 each carry an N-linked (GlcNAc...) asparagine glycan. 3 disulfides stabilise this stretch: Cys55-Cys81, Cys72-Cys112, and Cys95-Cys134. Residues 147 to 169 (VLYYLALVGHSMSIAALIASMGI) traverse the membrane as a helical segment. Residues 170-181 (FLFFKNLSCQRV) lie on the Cytoplasmic side of the membrane. A helical transmembrane segment spans residues 182–202 (TLHKNMFLTYILNSIIIIIHL). At 203 to 256 (VEVVPNGDLVRRDPMHIFHHNTYMWTMQWELSPPLPLSAHEGKMDPHDSEVISC) the chain is on the extracellular side. Residues Cys256 and Cys326 are joined by a disulfide bond. A helical membrane pass occupies residues 257 to 279 (KILHFFHQYMMACNYFWMLCEGI). Residues 280–296 (YLHTLIVMAVFTEDQRL) are Cytoplasmic-facing. Residues 297-317 (RWYYLLGWGFPIVPTIIHAIT) form a helical membrane-spanning segment. Residues 318–333 (RAVYYNDNCWLSTETH) are Extracellular-facing. A helical membrane pass occupies residues 334 to 357 (LLYIIHGPVMAALVVNFFFLLNIV). At 358–377 (RVLVTKMRQTHEAEAYMYLK) the chain is on the cytoplasmic side. A helical membrane pass occupies residues 378-396 (AVKATMVLVPLLGIQFVVF). Residues 397 to 404 (PWRPSNKV) are Extracellular-facing. Residues 405–431 (LGKIYDYLMHSLIHFQGFFVATIYCFC) form a helical membrane-spanning segment. The Cytoplasmic segment spans residues 432–516 (NHEVQVTLKR…MNVIQQDSSA (85 aa)). A disordered region spans residues 489-516 (RNPPVSNNEGEEGTEMIPMNVIQQDSSA).

The protein belongs to the G-protein coupled receptor 2 family. In terms of assembly, heterodimer of CALCR and RAMP1, RAMP2 or RAMP3; the receptor complexes function as AMYR1, AMYR2 and AMYR3 receptors, respectively, and respond to amylin/IAPP, calcitonin/CT and CGRP1 ligands. Interacts with GPRASP2.

The protein localises to the cell membrane. G protein-coupled receptor activated by ligand peptides amylin (IAPP), calcitonin (CT/CALCA) and calcitonin gene-related peptide type 1 (CGRP1/CALCA). CALCR interacts with receptor-activity-modifying proteins RAMP1, 2 and 3 to form receptor complexes AMYR1, 2 and 3, respectively. IAPP, CT and CGRP1 activate CALCR and AMYRs with distinct modes of receptor activation resulting in specific phenotypes. Ligand binding causes a conformation change that triggers signaling via guanine nucleotide-binding proteins (G proteins) and modulates the activity of downstream effectors. Activates cAMP-dependent pathway. In Rattus norvegicus (Rat), this protein is Calcitonin receptor.